Consider the following 358-residue polypeptide: Peptide chain release factor 1 (358 aa).

Gln234 is subject to N5-methylglutamine.

Belongs to the prokaryotic/mitochondrial release factor family. Methylated by PrmC. Methylation increases the termination efficiency of RF1.

Its subcellular location is the cytoplasm. In terms of biological role, peptide chain release factor 1 directs the termination of translation in response to the peptide chain termination codons UAG and UAA. This is Peptide chain release factor 1 from Akkermansia muciniphila (strain ATCC BAA-835 / DSM 22959 / JCM 33894 / BCRC 81048 / CCUG 64013 / CIP 107961 / Muc).